A 332-amino-acid chain; its full sequence is Sphingolipid delta(4)-desaturase DES1-like (332 aa).

A run of 3 helical transmembrane segments spans residues 55–75, 83–103, and 119–139; these read PWAF…AAIL, ILSI…LAIH, and CLGI…FQKY. The Histidine box-1 signature appears at 103-107; sequence HELSH. The Histidine box-2 signature appears at 140-144; it reads HLEHH. A run of 3 helical transmembrane segments spans residues 164–184, 197–217, and 222–242; these read LVTN…FYAL, WEFI…LFFG, and AYLI…GHFI. The Histidine box-3 signature appears at 271 to 275; sequence HNEHH.

It belongs to the fatty acid desaturase type 1 family. DEGS subfamily. In terms of tissue distribution, specifically expressed in flowers.

It is found in the endoplasmic reticulum membrane. The catalysed reaction is an N-acylsphinganine + 2 Fe(II)-[cytochrome b5] + O2 + 2 H(+) = an N-acylsphing-4-enine + 2 Fe(III)-[cytochrome b5] + 2 H2O. Sphingolipid-delta-4-desaturase required for the biosynthesis of delta-4-unsaturated sphingolipids and derivatives. May be required for the biosynthesis of glucosylceramides. This chain is Sphingolipid delta(4)-desaturase DES1-like, found in Arabidopsis thaliana (Mouse-ear cress).